Reading from the N-terminus, the 147-residue chain is NAD(P)H-quinone oxidoreductase subunit N (147 aa).

It belongs to the complex I NdhN subunit family. As to quaternary structure, NDH-1 can be composed of about 15 different subunits; different subcomplexes with different compositions have been identified which probably have different functions.

The protein localises to the cellular thylakoid membrane. The catalysed reaction is a plastoquinone + NADH + (n+1) H(+)(in) = a plastoquinol + NAD(+) + n H(+)(out). The enzyme catalyses a plastoquinone + NADPH + (n+1) H(+)(in) = a plastoquinol + NADP(+) + n H(+)(out). In terms of biological role, NDH-1 shuttles electrons from an unknown electron donor, via FMN and iron-sulfur (Fe-S) centers, to quinones in the respiratory and/or the photosynthetic chain. The immediate electron acceptor for the enzyme in this species is believed to be plastoquinone. Couples the redox reaction to proton translocation, and thus conserves the redox energy in a proton gradient. Cyanobacterial NDH-1 also plays a role in inorganic carbon-concentration. The protein is NAD(P)H-quinone oxidoreductase subunit N of Synechococcus sp. (strain JA-2-3B'a(2-13)) (Cyanobacteria bacterium Yellowstone B-Prime).